The sequence spans 347 residues: Microtubule-associated protein Jupiter (347 aa).

The span at 1-14 (MISNFDCTDNQASS) shows a compositional bias: polar residues. Residues 1-33 (MISNFDCTDNQASSKVLRPPGGGSSDIFGSEMP) are disordered. S24 carries the phosphoserine modification. Phosphothreonine is present on residues T35 and T96. Residues S105, S134, and S145 each carry the phosphoserine modification. Disordered stretches follow at residues 127 to 193 (HYNG…PTPP) and 303 to 347 (GNPV…SGLW). A compositionally biased stretch (low complexity) spans 132 to 145 (SGSVSSASSSVSSS). Over residues 146–164 (TENLKMNSGSRSVFRNMST) the composition is skewed to polar residues. Residues 181–193 (PPSPVPIEVPTPP) show a composition bias toward pro residues.

It belongs to the MAP Jupiter family.

Its subcellular location is the nucleus. The protein localises to the cytoplasm. The protein resides in the cytoskeleton. It is found in the spindle. Binds to all microtubule populations. This is Microtubule-associated protein Jupiter from Drosophila yakuba (Fruit fly).